Reading from the N-terminus, the 76-residue chain is Vasotab-TY3 (76 aa).

Positions 1–21 are cleaved as a signal peptide; sequence MKFALFSVLVLMLIATFVAAD. The Kazal-like domain occupies 22-76; that stretch reads DCPRICTSDYTPVCGTPSGGRRSANRTFANQCGLDSHNCLNKGDTYDKLHDGECK. 3 disulfides stabilise this stretch: Cys-23–Cys-60, Cys-27–Cys-53, and Cys-35–Cys-75.

Expressed by the salivary gland.

It localises to the secreted. In terms of biological role, vasodilator protein that inhibits vasoconstriction of isolated rat femoral artery induced by phenylephrine. Since platelet aggregation and vasoconstriction are key hemostatic responses, particularly in small wounds, this protein likely participates in the antihemostatic responses during blood feeding. Blocks L-type calcium channels (Cav1/CACNA1) in left ventricular myocytes isolated from rat hearts. The sequence is that of Vasotab-TY3 from Tabanus yao (Horsefly).